The following is a 399-amino-acid chain: Chalcone synthase 2 (399 aa).

Residue Cys-166 is part of the active site.

This sequence belongs to the thiolase-like superfamily. Chalcone/stilbene synthases family.

The catalysed reaction is (E)-4-coumaroyl-CoA + 3 malonyl-CoA + 3 H(+) = 2',4,4',6'-tetrahydroxychalcone + 3 CO2 + 4 CoA. It participates in secondary metabolite biosynthesis; flavonoid biosynthesis. In terms of biological role, the primary product of this enzyme is 4,2',4',6'-tetrahydroxychalcone (also termed naringenin-chalcone or chalcone) which can under specific conditions spontaneously isomerize into naringenin. Substrate preference is feruloyl-CoA = caffeoyl-CoA &gt;&gt; cinnamoyl-CoA. In Hordeum vulgare (Barley), this protein is Chalcone synthase 2 (CHS2).